The primary structure comprises 188 residues: Ribosome-recycling factor (188 aa).

Belongs to the RRF family.

The protein resides in the cytoplasm. Functionally, responsible for the release of ribosomes from messenger RNA at the termination of protein biosynthesis. May increase the efficiency of translation by recycling ribosomes from one round of translation to another. In Cereibacter sphaeroides (strain ATCC 17025 / ATH 2.4.3) (Rhodobacter sphaeroides), this protein is Ribosome-recycling factor.